An 82-amino-acid chain; its full sequence is Cell division topological specificity factor (82 aa).

Belongs to the MinE family.

In terms of biological role, prevents the cell division inhibition by proteins MinC and MinD at internal division sites while permitting inhibition at polar sites. This ensures cell division at the proper site by restricting the formation of a division septum at the midpoint of the long axis of the cell. The chain is Cell division topological specificity factor from Buchnera aphidicola subsp. Cinara cedri (strain Cc).